We begin with the raw amino-acid sequence, 434 residues long: Glutamyl-tRNA reductase (434 aa).

Residues 49–52 (TCNR), serine 109, 114–116 (EPQ), and glutamine 120 each bind substrate. The active-site Nucleophile is the cysteine 50. NADP(+) is bound at residue 189 to 194 (GAGEMC).

This sequence belongs to the glutamyl-tRNA reductase family. As to quaternary structure, homodimer.

It carries out the reaction (S)-4-amino-5-oxopentanoate + tRNA(Glu) + NADP(+) = L-glutamyl-tRNA(Glu) + NADPH + H(+). Its pathway is porphyrin-containing compound metabolism; protoporphyrin-IX biosynthesis; 5-aminolevulinate from L-glutamyl-tRNA(Glu): step 1/2. Its function is as follows. Catalyzes the NADPH-dependent reduction of glutamyl-tRNA(Glu) to glutamate 1-semialdehyde (GSA). In Geobacter sulfurreducens (strain ATCC 51573 / DSM 12127 / PCA), this protein is Glutamyl-tRNA reductase.